A 143-amino-acid chain; its full sequence is HTH-type transcriptional regulator BudR (143 aa).

In terms of domain architecture, HTH lysR-type spans 1–58; the sequence is MELRYLRYFVAVARERHFTRAAKALGISQPPLSQQIKRLEEEVGTPLFRRLTRGVELT. Positions 18–37 form a DNA-binding region, H-T-H motif; sequence FTRAAKALGISQPPLSQQIK.

It belongs to the LysR transcriptional regulatory family.

Functionally, regulator of the budABC operon for 2,3-butanediol synthesis. The protein is HTH-type transcriptional regulator BudR (budR) of Klebsiella aerogenes (Enterobacter aerogenes).